The chain runs to 180 residues: Shikimate kinase (180 aa).

19–24 (GAGKTT) is an ATP binding site. Position 23 (Thr-23) interacts with Mg(2+). Asp-41, Arg-65, and Gly-87 together coordinate substrate. Arg-125 is a binding site for ATP. Arg-144 contributes to the substrate binding site.

The protein belongs to the shikimate kinase family. As to quaternary structure, monomer. It depends on Mg(2+) as a cofactor.

It localises to the cytoplasm. It carries out the reaction shikimate + ATP = 3-phosphoshikimate + ADP + H(+). The protein operates within metabolic intermediate biosynthesis; chorismate biosynthesis; chorismate from D-erythrose 4-phosphate and phosphoenolpyruvate: step 5/7. In terms of biological role, catalyzes the specific phosphorylation of the 3-hydroxyl group of shikimic acid using ATP as a cosubstrate. The chain is Shikimate kinase from Acinetobacter baumannii (strain SDF).